The following is a 427-amino-acid chain: tRNA(Ile)-lysidine synthase (427 aa).

21 to 26 serves as a coordination point for ATP; sequence SGGADS.

It belongs to the tRNA(Ile)-lysidine synthase family.

It is found in the cytoplasm. It carries out the reaction cytidine(34) in tRNA(Ile2) + L-lysine + ATP = lysidine(34) in tRNA(Ile2) + AMP + diphosphate + H(+). In terms of biological role, ligates lysine onto the cytidine present at position 34 of the AUA codon-specific tRNA(Ile) that contains the anticodon CAU, in an ATP-dependent manner. Cytidine is converted to lysidine, thus changing the amino acid specificity of the tRNA from methionine to isoleucine. The sequence is that of tRNA(Ile)-lysidine synthase from Actinobacillus succinogenes (strain ATCC 55618 / DSM 22257 / CCUG 43843 / 130Z).